The sequence spans 62 residues: Trypsin inhibitor MCI-3 (62 aa).

This sequence belongs to the protease inhibitor I13 (potato type I serine protease inhibitor) family.

In Momordica charantia (Bitter gourd), this protein is Trypsin inhibitor MCI-3.